We begin with the raw amino-acid sequence, 328 residues long: Thiamine-monophosphate kinase (328 aa).

Residues Asp-30, Thr-45, Thr-46, and Asp-47 each coordinate Mg(2+). His-54 contacts substrate. Positions 75 and 122 each coordinate Mg(2+). Residues 121–122 and Arg-146 each bind ATP; that span reads GD. Asp-211 contributes to the Mg(2+) binding site. Residue Ser-213 participates in ATP binding. Asp-214 contacts Mg(2+). Substrate-binding residues include Glu-262 and Phe-321.

Belongs to the thiamine-monophosphate kinase family.

It catalyses the reaction thiamine phosphate + ATP = thiamine diphosphate + ADP. It functions in the pathway cofactor biosynthesis; thiamine diphosphate biosynthesis; thiamine diphosphate from thiamine phosphate: step 1/1. Catalyzes the ATP-dependent phosphorylation of thiamine-monophosphate (TMP) to form thiamine-pyrophosphate (TPP), the active form of vitamin B1. This Haemophilus influenzae (strain ATCC 51907 / DSM 11121 / KW20 / Rd) protein is Thiamine-monophosphate kinase.